A 208-amino-acid chain; its full sequence is Ribosomal RNA large subunit methyltransferase E (208 aa).

Positions 61, 63, 81, 97, and 122 each coordinate S-adenosyl-L-methionine. K162 acts as the Proton acceptor in catalysis.

It belongs to the class I-like SAM-binding methyltransferase superfamily. RNA methyltransferase RlmE family.

The protein resides in the cytoplasm. It carries out the reaction uridine(2552) in 23S rRNA + S-adenosyl-L-methionine = 2'-O-methyluridine(2552) in 23S rRNA + S-adenosyl-L-homocysteine + H(+). Its function is as follows. Specifically methylates the uridine in position 2552 of 23S rRNA at the 2'-O position of the ribose in the fully assembled 50S ribosomal subunit. The sequence is that of Ribosomal RNA large subunit methyltransferase E from Pseudomonas putida (strain W619).